A 404-amino-acid chain; its full sequence is Pectate lyase E (404 aa).

Positions 1 to 41 are cleaved as a signal peptide; it reads MNNSRMSSVSTQKTTGRSALGTKSALAAIIATTMMVSVASA. Residues D182 and D225 each contribute to the Ca(2+) site. The active site involves R278.

The protein belongs to the polysaccharide lyase 1 family. PLBC subfamily. The cofactor is Ca(2+).

It localises to the secreted. The enzyme catalyses Eliminative cleavage of (1-&gt;4)-alpha-D-galacturonan to give oligosaccharides with 4-deoxy-alpha-D-galact-4-enuronosyl groups at their non-reducing ends.. Its pathway is glycan metabolism; pectin degradation; 2-dehydro-3-deoxy-D-gluconate from pectin: step 2/5. Involved in maceration and soft-rotting of plant tissue. Pectate lyases have been implicated as pathogenicity factors which induce maceration or rotting of plant tissue. PelE is sufficient to induce these effects under laboratory conditions. This chain is Pectate lyase E (pelE), found in Dickeya chrysanthemi (Pectobacterium chrysanthemi).